Here is a 241-residue protein sequence, read N- to C-terminus: Uridylate kinase (241 aa).

15–18 (KMSG) serves as a coordination point for ATP. G57 is a UMP binding site. ATP contacts are provided by G58 and R62. UMP is bound by residues D77 and 138–145 (TGNPFFTT). ATP is bound by residues T165, Y171, and D174.

It belongs to the UMP kinase family. As to quaternary structure, homohexamer.

It localises to the cytoplasm. The catalysed reaction is UMP + ATP = UDP + ADP. The protein operates within pyrimidine metabolism; CTP biosynthesis via de novo pathway; UDP from UMP (UMPK route): step 1/1. Its activity is regulated as follows. Inhibited by UTP. Its function is as follows. Catalyzes the reversible phosphorylation of UMP to UDP. The polypeptide is Uridylate kinase (Dichelobacter nodosus (strain VCS1703A)).